Consider the following 459-residue polypeptide: V-type ATP synthase beta chain (459 aa).

The protein belongs to the ATPase alpha/beta chains family.

Produces ATP from ADP in the presence of a proton gradient across the membrane. The V-type beta chain is a regulatory subunit. The protein is V-type ATP synthase beta chain of Thermoanaerobacter sp. (strain X514).